Here is a 105-residue protein sequence, read N- to C-terminus: Thioredoxin (105 aa).

Positions 1–105 (MANNVTDSSF…SLLDWINKSI (105 aa)) constitute a Thioredoxin domain. An intrachain disulfide couples Cys30 to Cys33.

Belongs to the thioredoxin family.

In terms of biological role, component of the thioredoxin-thioredoxin reductase system. Participates in various redox reactions through the reversible oxidation of its active center dithiol to a disulfide and catalyzes dithiol-disulfide exchange reactions. The chain is Thioredoxin (trxA) from Rickettsia felis (strain ATCC VR-1525 / URRWXCal2) (Rickettsia azadi).